A 205-amino-acid chain; its full sequence is DNA-directed RNA polymerase RPB5 homolog (205 aa).

It belongs to the archaeal RpoH/eukaryotic RPB5 RNA polymerase subunit family. Part of the viral DNA-directed RNA polymerase that consists of 8 polII-like subunits (RPB1, RPB2, RPB3, RPB5, RPB6, RPB7, RPB9, RPB10), a capping enzyme and a termination factor.

It is found in the host cytoplasm. The protein resides in the virion. Its function is as follows. Component of the DNA-directed RNA polymerase (RNAP) that catalyzes the transcription in the cytoplasm of viral DNA into RNA using the four ribonucleoside triphosphates as substrates. The sequence is that of DNA-directed RNA polymerase RPB5 homolog from Ornithodoros (relapsing fever ticks).